A 410-amino-acid chain; its full sequence is Lissencephaly-1 homolog B (410 aa).

The LisH domain maps to 7-39; sequence QRDELNRAIADYLRSNGYEEAYSTFKKEAELDM. A coiled-coil region spans residues 56-82; the sequence is TSVIRLQKKVMELESKLNEAKEEITLG. WD repeat units follow at residues 106-147, 148-187, 190-229, 232-271, 274-333, 336-375, and 378-410; these read GHRS…RTLK, GHTDSVQDISFDQTGKLLASCSADMTIKLWDFQGFECIRT, GHDHNVSSVAIMPNGDHIVSASRDKTIKMWEVATGYCVKT, GHREWVRMVRPNQDGSLIASCSNDQTVRVWVATSKECKAE, EHEH…CLMT, GHDNWVRGVLVHPGGRFIVSCADDKTLRIWDYKNKRCMKT, and AHEHFVTSLDMHQTAPYVVTGSVDQTVKVWECR.

It belongs to the WD repeat LIS1/nudF family. As to quaternary structure, can self-associate. Component of the cytosolic PAF-AH (I) heterotetrameric enzyme, which is composed of PAFAH1B1 (beta), PAFAH1B2 (alpha2) and PAFAH1B3 (alpha1) subunits. The catalytic activity of the enzyme resides in the alpha1 (PAFAH1B3) and alpha2 (PAFAH1B2) subunits, whereas the beta subunit (PAFAH1B1) has regulatory activity. Trimer formation is not essential for the catalytic activity. Interacts with dynein, dynactin, nde1 and ndel1.

It localises to the cytoplasm. The protein resides in the cytoskeleton. The protein localises to the microtubule organizing center. Its subcellular location is the centrosome. Its function is as follows. Regulatory subunit (beta subunit) of the cytosolic type I platelet-activating factor (PAF) acetylhydrolase (PAF-AH (I)), an enzyme that catalyzes the hydrolyze of the acetyl group at the sn-2 position of PAF and its analogs and participates in PAF inactivation. Regulates the PAF-AH (I) activity in a catalytic dimer composition-dependent manner. Positively regulates the activity of the minus-end directed microtubule motor protein dynein. May enhance dynein-mediated microtubule sliding by targeting dynein to the microtubule plus end. Required for several dynein- and microtubule-dependent processes such as the maintenance of Golgi integrity, the peripheral transport of microtubule fragments and the coupling of the nucleus and centrosome. May be required for proliferation of neuronal precursors and neuronal migration. The polypeptide is Lissencephaly-1 homolog B (pafah1b1-2) (Salmo salar (Atlantic salmon)).